The chain runs to 265 residues: MTDRYAVFGHPIAHSKSPQIHAAFARQTGQDMCYEAILAPLEGFTESIARFAAQGGRGANVTVPFKEEAFRLADRLTPRAERAGAVNTLMFDADGILGDNTDGTGLVADLTGNLKRPLATRRILLVGAGGAARGVIAPLLEQAPAELVIANRTVSRAEQLAELFDGRLRACGFDALDTPFDVVINATAASLAGELPPLPPQVFGTGALAYDMMYGRDTPFLAFARAHGADTADGLGMLVEQAAEAFHLWRGVRPDTAPVIAALRA.

Shikimate is bound by residues 15 to 17 (SKS) and Thr62. Lys66 functions as the Proton acceptor in the catalytic mechanism. Shikimate-binding residues include Asn87 and Asp102. Residues 127–131 (GAGGA), 151–156 (NRTVSR), and Met212 contribute to the NADP(+) site. A shikimate-binding site is contributed by Tyr214. Gly234 is an NADP(+) binding site.

The protein belongs to the shikimate dehydrogenase family. As to quaternary structure, homodimer.

The catalysed reaction is shikimate + NADP(+) = 3-dehydroshikimate + NADPH + H(+). Its pathway is metabolic intermediate biosynthesis; chorismate biosynthesis; chorismate from D-erythrose 4-phosphate and phosphoenolpyruvate: step 4/7. Functionally, involved in the biosynthesis of the chorismate, which leads to the biosynthesis of aromatic amino acids. Catalyzes the reversible NADPH linked reduction of 3-dehydroshikimate (DHSA) to yield shikimate (SA). The chain is Shikimate dehydrogenase (NADP(+)) from Thiobacillus denitrificans (strain ATCC 25259 / T1).